The chain runs to 445 residues: MGAVSGKTFYIETFGCQMNAHDSEKVVGTLLAEGYEQVATPEAAELVFYNTCSIRDKAEQKVFNRLQNFKREGMKGKIFGVLGCVAQQEGEKIFDRAPHVSLVAGSASYTRLPEMLVQLEAGNRRVTGLSLDTEETFDTPFTRRDNPHRAYLTIIEGCDKACAYCVVPFTRGPERSRTSESVMAEARGLTEKGYTEVQLLGQNVNSYRDPSPAGWDFATLLAKVAEIPGMRRVRYTTSHPRDFVRPIVDAMDANEAICDHIHLPVQSGSSKVLAAMDRLYTRDEYLRRIDWIKSAKRRYSLTTDIIIGFPGETDADFEQTLDLLDEVQYDSLFSFKYSPRPNTSALAMEDRIPEEEKQRRLLTLQEKQRAIQIRRNAEMIGSIQEVLVEGRNQALGQWIGRTTCNRTLNFSHPDTNGNELVGKYLPVRVTRSGPNSLVGESAALV.

Positions 7–121 (KTFYIETFGC…LPEMLVQLEA (115 aa)) constitute an MTTase N-terminal domain. Cys16, Cys52, Cys84, Cys158, Cys162, and Cys165 together coordinate [4Fe-4S] cluster. A Radical SAM core domain is found at 144 to 374 (RDNPHRAYLT…QEKQRAIQIR (231 aa)). Residues 377-443 (AEMIGSIQEV…PNSLVGESAA (67 aa)) form the TRAM domain.

This sequence belongs to the methylthiotransferase family. MiaB subfamily. In terms of assembly, monomer. The cofactor is [4Fe-4S] cluster.

It localises to the cytoplasm. The enzyme catalyses N(6)-dimethylallyladenosine(37) in tRNA + (sulfur carrier)-SH + AH2 + 2 S-adenosyl-L-methionine = 2-methylsulfanyl-N(6)-dimethylallyladenosine(37) in tRNA + (sulfur carrier)-H + 5'-deoxyadenosine + L-methionine + A + S-adenosyl-L-homocysteine + 2 H(+). Its function is as follows. Catalyzes the methylthiolation of N6-(dimethylallyl)adenosine (i(6)A), leading to the formation of 2-methylthio-N6-(dimethylallyl)adenosine (ms(2)i(6)A) at position 37 in tRNAs that read codons beginning with uridine. The chain is tRNA-2-methylthio-N(6)-dimethylallyladenosine synthase from Solibacter usitatus (strain Ellin6076).